The primary structure comprises 234 residues: Probable ascorbate-specific transmembrane electron transporter 1 (234 aa).

At 1–9 (MGLGVRAAP) the chain is on the cytoplasmic side. A helical membrane pass occupies residues 10 to 30 (FTYVAHALAVAAATMVLVWCI). One can recognise a Cytochrome b561 domain in the interval 13 to 217 (VAHALAVAAA…FGASVVVAAV (205 aa)). Over 31–48 (HFRGGLAFEATNKNLIFN) the chain is Extracellular. A helical membrane pass occupies residues 49-69 (VHPVLMLIGYIILGSEAIMVY). His-50 is a binding site for heme b. 65–73 (AIMVYKVLP) is a binding site for L-ascorbate. Residues 70–82 (KVLPTWKHDTTKL) are Cytoplasmic-facing. A helical transmembrane segment spans residues 83–103 (IHLILHAIALVFGAVGIYCAF). Positions 84 and 118 each coordinate heme b. Topologically, residues 104–121 (KFHNESGIANLYSLHSWL) are extracellular. 114-123 (LYSLHSWLGI) lines the monodehydro-L-ascorbate radical pocket. The chain crosses the membrane as a helical span at residues 122–142 (GIGTICLYGIQWIFGFVAFFF). The Cytoplasmic portion of the chain corresponds to 143 to 151 (PRASPSVRK). A helical membrane pass occupies residues 152 to 172 (GVLPWHILFGLFVYILALATA). His-157 contributes to the heme b binding site. Residues 173-194 (ELGFLEKLTFLQSSGLDKYGAE) are Extracellular-facing. Residues 195–215 (AFLVNFTALIVVLFGASVVVA) form a helical membrane-spanning segment. Residues 216 to 234 (AVSPARVEEPHEYAPIPES) lie on the Cytoplasmic side of the membrane.

The cofactor is heme b.

It localises to the membrane. Functionally, two-heme-containing cytochrome. Catalyzes ascorbate-dependent trans-membrane electron transfer by utilizing a concerted H(+)/e(-) transfer mechanism. This Oryza sativa subsp. japonica (Rice) protein is Probable ascorbate-specific transmembrane electron transporter 1.